A 220-amino-acid polypeptide reads, in one-letter code: Iron-sulfur cluster repair protein YtfE (220 aa).

It belongs to the RIC family. YtfE subfamily. As to quaternary structure, homodimer.

Its subcellular location is the cytoplasm. In terms of biological role, di-iron-containing protein involved in the repair of iron-sulfur clusters damaged by oxidative and nitrosative stress conditions. The polypeptide is Iron-sulfur cluster repair protein YtfE (Escherichia coli (strain SMS-3-5 / SECEC)).